The primary structure comprises 516 residues: Na(+)/H(+) antiporter NhaB (516 aa).

A run of 12 helical transmembrane segments spans residues 23–43 (LALI…PFVA), 61–80 (CYPL…IGMT), 97–117 (LLLM…LFVF), 120–140 (LLLG…AAAF), 144–164 (FLDA…FYGI), 202–222 (LMMH…VGEP), 238–258 (FFLR…LTCL), 303–323 (ALIG…VGLI), 348–368 (TEAL…AVII), 391–411 (LFYL…VGTV), 447–467 (ATPN…APLI), and 475–495 (VWMA…CVEF).

It belongs to the NhaB Na(+)/H(+) (TC 2.A.34) antiporter family.

Its subcellular location is the cell inner membrane. It catalyses the reaction 2 Na(+)(in) + 3 H(+)(out) = 2 Na(+)(out) + 3 H(+)(in). Na(+)/H(+) antiporter that extrudes sodium in exchange for external protons. The protein is Na(+)/H(+) antiporter NhaB of Klebsiella pneumoniae subsp. pneumoniae (strain ATCC 700721 / MGH 78578).